A 336-amino-acid chain; its full sequence is Fructose-1,6-bisphosphatase class 1 (336 aa).

Residues Glu-92, Asp-115, Leu-117, and Asp-118 each coordinate Mg(2+). Residues 118–121 (DGSS), Asn-211, Tyr-244, 262–264 (YLY), and Lys-274 each bind substrate. Glu-280 is a Mg(2+) binding site.

It belongs to the FBPase class 1 family. As to quaternary structure, homotetramer. It depends on Mg(2+) as a cofactor.

It is found in the cytoplasm. The catalysed reaction is beta-D-fructose 1,6-bisphosphate + H2O = beta-D-fructose 6-phosphate + phosphate. It participates in carbohydrate biosynthesis; gluconeogenesis. In Hahella chejuensis (strain KCTC 2396), this protein is Fructose-1,6-bisphosphatase class 1.